We begin with the raw amino-acid sequence, 365 residues long: Phosphoserine aminotransferase (365 aa).

L-glutamate is bound at residue arginine 40. Pyridoxal 5'-phosphate-binding positions include 74 to 75 (AS), phenylalanine 99, threonine 155, aspartate 177, and glutamine 200. Lysine 201 carries the post-translational modification N6-(pyridoxal phosphate)lysine. 241–242 (NT) is a pyridoxal 5'-phosphate binding site.

This sequence belongs to the class-V pyridoxal-phosphate-dependent aminotransferase family. SerC subfamily. In terms of assembly, homodimer. Pyridoxal 5'-phosphate serves as cofactor.

Its subcellular location is the cytoplasm. The enzyme catalyses O-phospho-L-serine + 2-oxoglutarate = 3-phosphooxypyruvate + L-glutamate. It carries out the reaction 4-(phosphooxy)-L-threonine + 2-oxoglutarate = (R)-3-hydroxy-2-oxo-4-phosphooxybutanoate + L-glutamate. It participates in amino-acid biosynthesis; L-serine biosynthesis; L-serine from 3-phospho-D-glycerate: step 2/3. In terms of biological role, catalyzes the reversible conversion of 3-phosphohydroxypyruvate to phosphoserine and of 3-hydroxy-2-oxo-4-phosphonooxybutanoate to phosphohydroxythreonine. In Lactococcus lactis subsp. cremoris (strain SK11), this protein is Phosphoserine aminotransferase.